A 180-amino-acid polypeptide reads, in one-letter code: Phosphoribosylaminoimidazole carboxylase (180 aa).

6 residues coordinate substrate: Ser35, Asp38, Ser62, Lys65, Gly89, and Ser91.

It belongs to the AIR carboxylase family. Class II subfamily.

It carries out the reaction 5-amino-1-(5-phospho-D-ribosyl)imidazole-4-carboxylate + H(+) = 5-amino-1-(5-phospho-beta-D-ribosyl)imidazole + CO2. Its pathway is purine metabolism; IMP biosynthesis via de novo pathway; 5-amino-1-(5-phospho-D-ribosyl)imidazole-4-carboxylate from 5-amino-1-(5-phospho-D-ribosyl)imidazole (carboxylase route): step 1/1. Catalyzes the reversible conversion of 5-aminoimidazole ribonucleotide (AIR) and CO(2) to 4-carboxy-5-aminoimidazole ribonucleotide (CAIR). In Archaeoglobus fulgidus (strain ATCC 49558 / DSM 4304 / JCM 9628 / NBRC 100126 / VC-16), this protein is Phosphoribosylaminoimidazole carboxylase.